The chain runs to 110 residues: Large ribosomal subunit protein P2C (110 aa).

The disordered stretch occupies residues A83–D110. Residues K95–M104 are compositionally biased toward acidic residues. S100 carries the post-translational modification Phosphoserine.

This sequence belongs to the eukaryotic ribosomal protein P1/P2 family. As to quaternary structure, component of the large ribosomal subunit (LSU). Mature yeast ribosomes consist of a small (40S) and a large (60S) subunit. The 40S small subunit contains 1 molecule of ribosomal RNA (18S rRNA) and at least 33 different proteins. The large 60S subunit contains 3 rRNA molecules (25S, 5.8S and 5S rRNA) and at least 46 different proteins. The acidic ribosomal P-proteins form the stalk structure of the 60S subunit. They are organized as a pentameric complex in which uL10/P0 interacts with 2 heterodimers of P1 and P2 proteins.

It localises to the cytoplasm. Functionally, component of the ribosome, a large ribonucleoprotein complex responsible for the synthesis of proteins in the cell. The small ribosomal subunit (SSU) binds messenger RNAs (mRNAs) and translates the encoded message by selecting cognate aminoacyl-transfer RNA (tRNA) molecules. The large subunit (LSU) contains the ribosomal catalytic site termed the peptidyl transferase center (PTC), which catalyzes the formation of peptide bonds, thereby polymerizing the amino acids delivered by tRNAs into a polypeptide chain. The nascent polypeptides leave the ribosome through a tunnel in the LSU and interact with protein factors that function in enzymatic processing, targeting, and the membrane insertion of nascent chains at the exit of the ribosomal tunnel. The chain is Large ribosomal subunit protein P2C (rpp203) from Schizosaccharomyces pombe (strain 972 / ATCC 24843) (Fission yeast).